We begin with the raw amino-acid sequence, 349 residues long: MGPISAPSCRWRIPWQGLLLTASLFTFWNPPTTAQLTIEAVPSNAAEGKEVLLLVHNLPQDPRGYNWYKGETVDANRRIIGYVISNQQITPGPAYSNRETIYPNASLLMRNVTRNDTGSYTLQVIKLNLMSEEVTGQFSVHPETPKPSISSNNSNPVEDKDAVAFTCEPETQNTTYLWWVNGQSLPVSPRLQLSNGNRTLTLLSVTRNDVGPYECEIQNPASANFSDPVTLNVLYGPDAPTISPSDTYYHAGVNLNLSCHAASNPPSQYSWSVNGTFQQYTQKLFIPNITTKNSGSYACHTTNSATGRNRTTVRMITVSDALVQGSSPGLSARATVSIMIGVLARVALI.

The first 34 residues, Met-1–Ala-34, serve as a signal peptide directing secretion. The 108-residue stretch at Gln-35–Pro-142 folds into the Ig-like V-type domain. N-linked (GlcNAc...) asparagine glycosylation is found at Asn-104, Asn-111, Asn-115, Asn-152, Asn-173, Asn-197, Asn-224, Asn-256, Asn-274, Asn-288, and Asn-309. Ig-like C2-type domains follow at residues Pro-145–Asn-232 and Pro-237–Ser-319. Cys-167 and Cys-215 are joined by a disulfide. Cys-259 and Cys-299 form a disulfide bridge. Asp-320 carries GPI-anchor amidated aspartate lipidation. The propeptide at Ala-321–Ile-349 is removed in mature form.

Belongs to the immunoglobulin superfamily. CEA family. In terms of assembly, monomer. Heterodimer with CEACAM6; heterodimerizes via its Ig-like V-type domain. Post-translationally, glycosylated. Expressed in leukocytes of chronic myeloid Leukemia patients and bone marrow.

The protein localises to the cell membrane. It is found in the cell surface. Cell surface glycoprotein that plays a role in cell adhesion in a calcium-independent manner. Mediates heterophilic cell adhesion with other carcinoembryonic antigen-related cell adhesion molecules, such as CEACAM6. Heterophilic interaction with CEACAM8 occurs in activated neutrophils. The sequence is that of Cell adhesion molecule CEACAM8 from Homo sapiens (Human).